A 248-amino-acid chain; its full sequence is ATP synthase subunit a, chloroplastic (248 aa).

A run of 5 helical transmembrane segments spans residues Gln-38–Val-58, Val-96–Leu-116, Ile-135–Thr-155, Leu-200–Leu-220, and Gly-221–Gly-241.

This sequence belongs to the ATPase A chain family. In terms of assembly, F-type ATPases have 2 components, CF(1) - the catalytic core - and CF(0) - the membrane proton channel. CF(1) has five subunits: alpha(3), beta(3), gamma(1), delta(1), epsilon(1). CF(0) has four main subunits: a, b, b' and c.

Its subcellular location is the plastid. It localises to the chloroplast thylakoid membrane. Functionally, key component of the proton channel; it plays a direct role in the translocation of protons across the membrane. The polypeptide is ATP synthase subunit a, chloroplastic (Nymphaea alba (White water-lily)).